We begin with the raw amino-acid sequence, 295 residues long: 33 kDa chaperonin (295 aa).

2 cysteine pairs are disulfide-bonded: cysteine 238–cysteine 240 and cysteine 271–cysteine 274.

The protein belongs to the HSP33 family. Post-translationally, under oxidizing conditions two disulfide bonds are formed involving the reactive cysteines. Under reducing conditions zinc is bound to the reactive cysteines and the protein is inactive.

It is found in the cytoplasm. Redox regulated molecular chaperone. Protects both thermally unfolding and oxidatively damaged proteins from irreversible aggregation. Plays an important role in the bacterial defense system toward oxidative stress. This chain is 33 kDa chaperonin, found in Clostridium botulinum (strain Eklund 17B / Type B).